Here is a 79-residue protein sequence, read N- to C-terminus: Large ribosomal subunit protein uL29 (79 aa).

The protein belongs to the universal ribosomal protein uL29 family.

The protein is Large ribosomal subunit protein uL29 of Nocardia farcinica (strain IFM 10152).